Here is a 552-residue protein sequence, read N- to C-terminus: HTH-type transcriptional regulator SgrR (552 aa).

The 116-residue stretch at 1 to 116 (MPSGRLQQQF…LISHLGRSFR (116 aa)) folds into the HTH marR-type domain. Positions 26 to 49 (LNELADLLNCSRRHMRTLLNTMQA) form a DNA-binding region, H-T-H motif. Residues 163–493 (ELEADIAHHW…RDWQDDAAQW (331 aa)) form a solute-binding region.

Its function is as follows. Activates the small RNA gene sgrS under glucose-phosphate stress conditions as well as yfdZ. Represses its own transcription under both stress and non-stress conditions. Might act as a sensor of the intracellular accumulation of phosphoglucose by binding these molecules in its C-terminal solute-binding domain. This chain is HTH-type transcriptional regulator SgrR, found in Salmonella typhi.